The primary structure comprises 346 residues: Small ribosomal subunit biogenesis GTPase RsgA (346 aa).

Residues 1-26 (MAKRKLTQNQTRRIQSNNAKTLHRHK) form a disordered region. Polar residues predominate over residues 7–20 (TQNQTRRIQSNNAK). One can recognise a CP-type G domain in the interval 103 to 271 (ENEISRPDYY…LIDSPGIREF (169 aa)). GTP is bound by residues 159–162 (NKVD) and 213–221 (GQSGVGKSS). Positions 295, 300, 302, and 308 each coordinate Zn(2+).

This sequence belongs to the TRAFAC class YlqF/YawG GTPase family. RsgA subfamily. In terms of assembly, monomer. Associates with 30S ribosomal subunit, binds 16S rRNA. It depends on Zn(2+) as a cofactor.

Its subcellular location is the cytoplasm. One of several proteins that assist in the late maturation steps of the functional core of the 30S ribosomal subunit. Helps release RbfA from mature subunits. May play a role in the assembly of ribosomal proteins into the subunit. Circularly permuted GTPase that catalyzes slow GTP hydrolysis, GTPase activity is stimulated by the 30S ribosomal subunit. This Haemophilus influenzae (strain PittGG) protein is Small ribosomal subunit biogenesis GTPase RsgA.